We begin with the raw amino-acid sequence, 499 residues long: CD-NTase-associated protein 4 (499 aa).

Positions 1–226 (MATSVLANWH…DFRFDGAARA (226 aa)) are N-terminal endonuclease domain. Catalysis depends on residues Asp49 and Gln72. Asp49 provides a ligand contact to Mg(2+). Ile73 is a binding site for Mg(2+). Residue Lys74 is part of the active site. Positions 258 to 464 (FRNVALRSFS…HIFSAAPNAV (207 aa)) are C-terminal SAVED domain.

The protein belongs to the Cap4 nuclease family. In terms of assembly, a monomer in the absence of ligand, in its presence it forms oligomers. Mg(2+) serves as cofactor.

With respect to regulation, DNase activity is activated upon ligand binding (cAAG). Inhibited by EDTA. Functionally, effector DNase of a CBASS antivirus system. CBASS (cyclic oligonucleotide-based antiphage signaling system) provides immunity against bacteriophages. The CD-NTase protein (CdnD) synthesizes cyclic nucleotides in response to infection; these serve as specific second messenger signals. The signals activate a diverse range of effectors, leading to bacterial cell death and thus abortive phage infection. A type II-C(AAG) CBASS system. Binds second messenger 3',3',3'-cyclic AMP-AMP-GMP (cAAG). In the presence of cAAG (synthesized by the cognate CD-NTase protein in the CBASS operon), endonucleolytically degrades dsDNA to approximately 17 bp length fragments, with a preference for 5'-C|NG sites. Only binds DNA in the presence of cAAG. Not activated by c-di-AMP, c-di-GMP, 3',3'-cyclic GMP-AMP (cGAMP) or the second messenger of A.baumanii strain ATCC 27244. In terms of biological role, protects E.coli against phage T2 infection. When the cdnD-cap2-cap3-cap4 operon is introduced in E.coli there is a more than 10(3) decrease in the efficiency of T2 plaque formation. The operon does not protect against phage T5 and only about 10-fold against T7. Expression of cdnD-cap4 alone protects E.coli against phage T2 infection. The chain is CD-NTase-associated protein 4 from Enterobacter hormaechei subsp. hoffmannii (strain UCI 50).